Consider the following 121-residue polypeptide: Ribonuclease P protein component (121 aa).

This sequence belongs to the RnpA family. As to quaternary structure, consists of a catalytic RNA component (M1 or rnpB) and a protein subunit.

It catalyses the reaction Endonucleolytic cleavage of RNA, removing 5'-extranucleotides from tRNA precursor.. RNaseP catalyzes the removal of the 5'-leader sequence from pre-tRNA to produce the mature 5'-terminus. It can also cleave other RNA substrates such as 4.5S RNA. The protein component plays an auxiliary but essential role in vivo by binding to the 5'-leader sequence and broadening the substrate specificity of the ribozyme. The polypeptide is Ribonuclease P protein component (Geobacillus kaustophilus (strain HTA426)).